Reading from the N-terminus, the 390-residue chain is Transforming protein cbl (390 aa).

The segment at 1-52 is disordered; sequence ASAGGGCRRGPSFSPGSIPSLAAERAPDPPLAMAGNVKKSSGAGGGGSGGSG. A compositionally biased stretch (gly residues) spans 42–52; sequence GAGGGGSGGSG. The segment at 77–205 is 4H; sequence PPCTVDKKMV…KGIFPSGLFQ (129 aa). One can recognise a Cbl-PTB domain in the interval 77–381; that stretch reads PPCTVDKKMV…GRNQNPDLTG (305 aa). The EF-hand-like stretch occupies residues 206–278; it reads GDTFRITKAD…FEFDIFTRLF (73 aa). Positions 259, 261, 263, 265, and 270 each coordinate Ca(2+). Residues 279–381 are SH2-like; the sequence is QPWSSLLRNW…GRNQNPDLTG (103 aa). Position 324 (arginine 324) interacts with 4-O-phospho-L-tyrosine.

Induces early B-lineage lymphomas. This Mus musculus (Mouse) protein is Transforming protein cbl (V-CBL).